The chain runs to 295 residues: Phosphatidylserine decarboxylase proenzyme (295 aa).

Active-site charge relay system; for autoendoproteolytic cleavage activity residues include D113, H169, and S256. The Schiff-base intermediate with substrate; via pyruvic acid; for decarboxylase activity role is filled by S256. Pyruvic acid (Ser); by autocatalysis is present on S256.

This sequence belongs to the phosphatidylserine decarboxylase family. PSD-B subfamily. Prokaryotic type II sub-subfamily. In terms of assembly, heterodimer of a large membrane-associated beta subunit and a small pyruvoyl-containing alpha subunit. Pyruvate serves as cofactor. Is synthesized initially as an inactive proenzyme. Formation of the active enzyme involves a self-maturation process in which the active site pyruvoyl group is generated from an internal serine residue via an autocatalytic post-translational modification. Two non-identical subunits are generated from the proenzyme in this reaction, and the pyruvate is formed at the N-terminus of the alpha chain, which is derived from the carboxyl end of the proenzyme. The autoendoproteolytic cleavage occurs by a canonical serine protease mechanism, in which the side chain hydroxyl group of the serine supplies its oxygen atom to form the C-terminus of the beta chain, while the remainder of the serine residue undergoes an oxidative deamination to produce ammonia and the pyruvoyl prosthetic group on the alpha chain. During this reaction, the Ser that is part of the protease active site of the proenzyme becomes the pyruvoyl prosthetic group, which constitutes an essential element of the active site of the mature decarboxylase.

It localises to the cell membrane. The enzyme catalyses a 1,2-diacyl-sn-glycero-3-phospho-L-serine + H(+) = a 1,2-diacyl-sn-glycero-3-phosphoethanolamine + CO2. It functions in the pathway phospholipid metabolism; phosphatidylethanolamine biosynthesis; phosphatidylethanolamine from CDP-diacylglycerol: step 2/2. Its function is as follows. Catalyzes the formation of phosphatidylethanolamine (PtdEtn) from phosphatidylserine (PtdSer). The polypeptide is Phosphatidylserine decarboxylase proenzyme (Clostridium botulinum (strain ATCC 19397 / Type A)).